The primary structure comprises 438 residues: Anaerobic glycerol-3-phosphate dehydrogenase subunit B (438 aa).

This sequence belongs to the anaerobic G-3-P dehydrogenase subunit B family. In terms of assembly, composed of a catalytic GlpA/B dimer and of membrane bound GlpC. Requires FMN as cofactor.

The catalysed reaction is a quinone + sn-glycerol 3-phosphate = dihydroxyacetone phosphate + a quinol. Its pathway is polyol metabolism; glycerol degradation via glycerol kinase pathway; glycerone phosphate from sn-glycerol 3-phosphate (anaerobic route): step 1/1. In terms of biological role, conversion of glycerol 3-phosphate to dihydroxyacetone. Uses fumarate or nitrate as electron acceptor. In Vibrio vulnificus (strain CMCP6), this protein is Anaerobic glycerol-3-phosphate dehydrogenase subunit B.